The following is a 337-amino-acid chain: DNA-directed RNA polymerase subunit alpha (337 aa).

Residues 1 to 233 (MIQKNWQELI…DQLALFINFK (233 aa)) form an alpha N-terminal domain (alpha-NTD) region. Residues 249-337 (FNPALLKKVD…DLAKRYEDQY (89 aa)) are alpha C-terminal domain (alpha-CTD).

Belongs to the RNA polymerase alpha chain family. As to quaternary structure, homodimer. The RNAP catalytic core consists of 2 alpha, 1 beta, 1 beta' and 1 omega subunit. When a sigma factor is associated with the core the holoenzyme is formed, which can initiate transcription.

It carries out the reaction RNA(n) + a ribonucleoside 5'-triphosphate = RNA(n+1) + diphosphate. Functionally, DNA-dependent RNA polymerase catalyzes the transcription of DNA into RNA using the four ribonucleoside triphosphates as substrates. The protein is DNA-directed RNA polymerase subunit alpha of Bartonella henselae (strain ATCC 49882 / DSM 28221 / CCUG 30454 / Houston 1) (Rochalimaea henselae).